Here is a 430-residue protein sequence, read N- to C-terminus: Protein trichome birefringence-like 24 (430 aa).

Residues 15–35 (VLLIKLISAILISFFAFRLFI) form a helical; Signal-anchor for type II membrane protein membrane-spanning segment. The short motif at 153–155 (GDS) is the GDS motif element. Residues 406 to 420 (DCLHWCLPGPFDYLN) carry the DCXHWCLPGXXDXWN motif motif.

This sequence belongs to the PC-esterase family. TBL subfamily.

The protein localises to the membrane. May act as a bridging protein that binds pectin and other cell wall polysaccharides. Probably involved in maintaining esterification of pectins. May be involved in the specific O-acetylation of cell wall polymers. The polypeptide is Protein trichome birefringence-like 24 (TBL24) (Arabidopsis thaliana (Mouse-ear cress)).